The sequence spans 402 residues: UDP-glucose 6-dehydrogenase (402 aa).

Residues Lys2 to Leu19, Val11, Asp29, Lys34, Thr83, Thr118, and Glu145 contribute to the NAD(+) site. Substrate-binding positions include Glu141–Glu145, Lys204, Asn208, Tyr249–Ser253, and Gly257. Tyr259 lines the NAD(+) pocket. The active-site Nucleophile is the Cys260. Position 263 (Lys263) interacts with NAD(+). Lys320 serves as a coordination point for substrate. Residue Arg327 coordinates NAD(+).

It belongs to the UDP-glucose/GDP-mannose dehydrogenase family.

It catalyses the reaction UDP-alpha-D-glucose + 2 NAD(+) + H2O = UDP-alpha-D-glucuronate + 2 NADH + 3 H(+). The protein operates within nucleotide-sugar biosynthesis; UDP-alpha-D-glucuronate biosynthesis; UDP-alpha-D-glucuronate from UDP-alpha-D-glucose: step 1/1. Its function is as follows. Catalyzes the formation of UDP-glucuronic acid which is required for capsular hyaluronic acid synthesis. The protein is UDP-glucose 6-dehydrogenase (hasB) of Streptococcus pyogenes serotype M3 (strain ATCC BAA-595 / MGAS315).